A 98-amino-acid polypeptide reads, in one-letter code: Integration host factor subunit beta (98 aa).

This sequence belongs to the bacterial histone-like protein family. As to quaternary structure, heterodimer of an alpha and a beta chain.

In terms of biological role, this protein is one of the two subunits of integration host factor, a specific DNA-binding protein that functions in genetic recombination as well as in transcriptional and translational control. In Pseudomonas putida (strain W619), this protein is Integration host factor subunit beta.